The sequence spans 410 residues: Argininosuccinate synthase (410 aa).

10 to 18 (AYSGGLDTS) lines the ATP pocket. Residues Y88 and S93 each coordinate L-citrulline. Residue G118 participates in ATP binding. Positions 120, 124, and 125 each coordinate L-aspartate. N124 provides a ligand contact to L-citrulline. The L-citrulline site is built by R128, S177, S186, E262, and Y274.

It belongs to the argininosuccinate synthase family. Type 1 subfamily. In terms of assembly, homotetramer.

The protein resides in the cytoplasm. It catalyses the reaction L-citrulline + L-aspartate + ATP = 2-(N(omega)-L-arginino)succinate + AMP + diphosphate + H(+). Its pathway is amino-acid biosynthesis; L-arginine biosynthesis; L-arginine from L-ornithine and carbamoyl phosphate: step 2/3. This chain is Argininosuccinate synthase, found in Thermoanaerobacter sp. (strain X514).